A 104-amino-acid polypeptide reads, in one-letter code: Cell division protein FtsL (104 aa).

Residues 1-20 are Cytoplasmic-facing; it reads MSKPSLTLPRIVLHDLWQHK. Residues 21-43 traverse the membrane as a helical segment; that stretch reads WILLLALLVLSNAVAVVYTSHVS. At 44–104 the chain is on the periplasmic side; sequence RKLTTEWDQL…PSEEIVVKVP (61 aa).

This sequence belongs to the FtsL family. Part of a complex composed of FtsB, FtsL and FtsQ.

The protein localises to the cell inner membrane. In terms of biological role, essential cell division protein. May link together the upstream cell division proteins, which are predominantly cytoplasmic, with the downstream cell division proteins, which are predominantly periplasmic. The polypeptide is Cell division protein FtsL (Shewanella oneidensis (strain ATCC 700550 / JCM 31522 / CIP 106686 / LMG 19005 / NCIMB 14063 / MR-1)).